The primary structure comprises 1140 residues: uncharacterized protein (1140 aa).

Disordered regions lie at residues 1-49 (MGSS…TSPE), 97-243 (SSDI…STIS), 280-427 (TSSS…KSSV), 512-541 (ASST…DLSK), 702-747 (FSTP…STAS), 916-1059 (CPEK…PIGR), and 1080-1103 (LSSS…GTSS). Residues 105-129 (VNDVESSTSGPSNSYSALSSTNAQL) show a composition bias toward polar residues. 3 stretches are compositionally biased toward low complexity: residues 130–154 (SSST…TSSS), 172–214 (TTAS…TTSD), and 221–243 (SSST…STIS). The segment covering 516 to 528 (LGSKVSSSNSRMA) has biased composition (polar residues). 2 stretches are compositionally biased toward low complexity: residues 529-541 (TSKT…DLSK) and 703-718 (STPE…VTSE). Polar residues predominate over residues 719-733 (APSTVSSMTTSAPFI). Over residues 734–747 (NNSTSARPSPSTAS) the composition is skewed to low complexity. The segment covering 949-961 (SFKDMKTSQETKK) has biased composition (basic and acidic residues). Residues 977-997 (EKTSPTTKASPSTSPSESKAA) show a composition bias toward low complexity. 3 stretches are compositionally biased toward polar residues: residues 998 to 1023 (GNTS…STSV), 1031 to 1055 (TKNS…STES), and 1089 to 1103 (RSTT…GTSS).

This is an uncharacterized protein from Saccharomyces cerevisiae (strain ATCC 204508 / S288c) (Baker's yeast).